The sequence spans 311 residues: GTPase Era (311 aa).

The Era-type G domain maps to 18–185 (RSGFVALIGA…AKYLAESVPN (168 aa)). A G1 region spans residues 26 to 33 (GAPNAGKS). 26-33 (GAPNAGKS) is a binding site for GTP. The segment at 52–56 (QTTRA) is G2. The G3 stretch occupies residues 73–76 (DTPG). GTP is bound by residues 73–77 (DTPGI) and 135–138 (NKVD). A G4 region spans residues 135–138 (NKVD). Positions 164–166 (ISA) are G5. The KH type-2 domain occupies 216 to 293 (LHEELPYAST…HQFLFVKVRE (78 aa)).

Belongs to the TRAFAC class TrmE-Era-EngA-EngB-Septin-like GTPase superfamily. Era GTPase family. As to quaternary structure, monomer.

Its subcellular location is the cytoplasm. It localises to the cell inner membrane. Its function is as follows. An essential GTPase that binds both GDP and GTP, with rapid nucleotide exchange. Plays a role in 16S rRNA processing and 30S ribosomal subunit biogenesis and possibly also in cell cycle regulation and energy metabolism. The protein is GTPase Era of Brucella melitensis biotype 1 (strain ATCC 23456 / CCUG 17765 / NCTC 10094 / 16M).